A 100-amino-acid polypeptide reads, in one-letter code: Small ribosomal subunit protein bS21 (100 aa).

Positions 61–100 (KLQREGLLPMKPKPVFGAGPGGDRGRGPAAGAGAGPRGPR) are disordered. Gly residues predominate over residues 78–100 (AGPGGDRGRGPAAGAGAGPRGPR).

The protein belongs to the bacterial ribosomal protein bS21 family.

The protein is Small ribosomal subunit protein bS21 of Rhodopseudomonas palustris (strain BisB18).